Reading from the N-terminus, the 355-residue chain is Ornithine transcarbamylase, mitochondrial (355 aa).

A mitochondrion-targeting transit peptide spans 1–35; it reads MLFINLRTLLNNAALRNGHNFVVRNFRCGQPVQDK. At K71 the chain carries N6-acetyllysine; alternate. K71 bears the N6-succinyllysine; alternate mark. The residue at position 81 (K81) is an N6-succinyllysine. K89 carries the post-translational modification N6-acetyllysine; alternate. K89 carries the post-translational modification N6-succinyllysine; alternate. 91–95 is a carbamoyl phosphate binding site; it reads STRTR. Residue S134 is modified to Phosphoserine. R142 is a binding site for carbamoyl phosphate. Residue R142 coordinates L-ornithine. K145 is modified (N6-acetyllysine; alternate). An N6-succinyllysine; alternate modification is found at K145. H169 is a carbamoyl phosphate binding site. Residue N200 coordinates L-ornithine. K222, K232, and K239 each carry N6-acetyllysine; alternate. Residues K222, K232, and K239 each carry the N6-succinyllysine; alternate modification. K244 bears the N6-acetyllysine mark. 264-268 is an L-ornithine binding site; that stretch reads DTWIS. N6-succinyllysine is present on residues K275 and K290. The residue at position 293 (K293) is an N6-acetyllysine; alternate. K293 carries the N6-succinyllysine; alternate modification. Residue 303–306 coordinates L-ornithine; the sequence is HCLP. The active site involves C304. K308 carries the post-translational modification N6-acetyllysine; alternate. K308 is modified (N6-succinyllysine; alternate). Position 331 (R331) interacts with carbamoyl phosphate. R331 contacts L-ornithine.

The protein belongs to the aspartate/ornithine carbamoyltransferase superfamily. OTCase family. Homotrimer. Acetylation at Lys-89 negatively regulates ornithine carbamoyltransferase activity in response to nutrient signals.

The protein localises to the mitochondrion matrix. It catalyses the reaction carbamoyl phosphate + L-ornithine = L-citrulline + phosphate + H(+). It participates in nitrogen metabolism; urea cycle; L-citrulline from L-ornithine and carbamoyl phosphate: step 1/1. With respect to regulation, negatively regulated by lysine acetylation. In terms of biological role, catalyzes the second step of the urea cycle, the condensation of carbamoyl phosphate with L-ornithine to form L-citrulline. The urea cycle ensures the detoxification of ammonia by converting it to urea for excretion. This is Ornithine transcarbamylase, mitochondrial from Ovis aries (Sheep).